A 556-amino-acid chain; its full sequence is RNA polymerase I-specific transcription initiation factor rrn5 (556 aa).

In terms of assembly, component of the UAF (upstream activation factor) complex which consists of spp27/uaf30, rrn5, rrn10, and histones H3 and H4. Interacts with rrn10.

It localises to the nucleus. The protein resides in the nucleolus. Its function is as follows. Component of the UAF (upstream activation factor) complex which interacts with the upstream element of the RNA polymerase I promoter and forms a stable preinitiation complex. UAF seems to stimulate basal transcription to a fully activated level. The polypeptide is RNA polymerase I-specific transcription initiation factor rrn5 (rrn5) (Schizosaccharomyces pombe (strain 972 / ATCC 24843) (Fission yeast)).